Here is a 243-residue protein sequence, read N- to C-terminus: MALVKEVLEVLNRLSPFELQESWDNSGLNVGSGNSEFSQIIACLEITLQIALNAQENALIITHHPLIFKPLKTLNDEAYPGNILKILIQKNISVISMHTNFDKTHLNKHFARALLRFDGLIEKGLMLVKENANIEFDVLLEKIKLSLGVGQLACVKSSQMIKDLAFVCGSGASMFSSLKAQSCLITGDVKYHDAMIAQSLGISLIDATHYYSERGFALIVAEILHSFNYLVTIENFKNPLQII.

A divalent metal cation contacts are provided by His63, His64, Asp102, His209, and Glu213.

This sequence belongs to the GTP cyclohydrolase I type 2/NIF3 family. In terms of assembly, homohexamer.

The enzyme catalyses GTP + H2O = 7,8-dihydroneopterin 3'-triphosphate + formate + H(+). Its pathway is cofactor biosynthesis; 7,8-dihydroneopterin triphosphate biosynthesis; 7,8-dihydroneopterin triphosphate from GTP: step 1/1. Functionally, converts GTP to dihydroneopterin triphosphate. The polypeptide is GTP cyclohydrolase 1 type 2 (Helicobacter pylori (strain J99 / ATCC 700824) (Campylobacter pylori J99)).